A 194-amino-acid chain; its full sequence is Holliday junction branch migration complex subunit RuvA (194 aa).

Positions 1–63 (MFEYMKGMIV…EDEAHLYGFV (63 aa)) are domain I. Residues 64 to 142 (DKEELAMFKK…DSQVEYDQNF (79 aa)) form a domain II region. The flexible linker stretch occupies residues 143–146 (FNHE). A domain III region spans residues 146 to 194 (ENKNNNEVVDALMALGYTKHEGEQAASAVRDTSLSTEEMIRKALNWLAR).

The protein belongs to the RuvA family. In terms of assembly, homotetramer. Forms an RuvA(8)-RuvB(12)-Holliday junction (HJ) complex. HJ DNA is sandwiched between 2 RuvA tetramers; dsDNA enters through RuvA and exits via RuvB. An RuvB hexamer assembles on each DNA strand where it exits the tetramer. Each RuvB hexamer is contacted by two RuvA subunits (via domain III) on 2 adjacent RuvB subunits; this complex drives branch migration. In the full resolvosome a probable DNA-RuvA(4)-RuvB(12)-RuvC(2) complex forms which resolves the HJ.

It localises to the cytoplasm. Functionally, the RuvA-RuvB-RuvC complex processes Holliday junction (HJ) DNA during genetic recombination and DNA repair, while the RuvA-RuvB complex plays an important role in the rescue of blocked DNA replication forks via replication fork reversal (RFR). RuvA specifically binds to HJ cruciform DNA, conferring on it an open structure. The RuvB hexamer acts as an ATP-dependent pump, pulling dsDNA into and through the RuvAB complex. HJ branch migration allows RuvC to scan DNA until it finds its consensus sequence, where it cleaves and resolves the cruciform DNA. The sequence is that of Holliday junction branch migration complex subunit RuvA from Alkaliphilus metalliredigens (strain QYMF).